The primary structure comprises 448 residues: Solute carrier family 52, riboflavin transporter, member 3-A (448 aa).

3 helical membrane passes run 11-31 (AFGLGSWVSINGLWVELPLIV), 40-60 (LPSYLTVIIQFANLGPLLVTL), and 73-93 (LAIYAVLSIGVVACILLAVFW). N-linked (GlcNAc...) asparagine glycosylation is present at Asn-94. The next 2 membrane-spanning stretches (helical) occupy residues 107–127 (AFFILTFFLALVDCTSSVTFL) and 138–158 (ITTYFIGEGLSGLVPGLVALA). 4 N-linked (GlcNAc...) asparagine glycosylation sites follow: Asn-168, Asn-171, Asn-175, and Asn-194. The next 6 membrane-spanning stretches (helical) occupy residues 198-218 (EIFFSFLAVMTTISLGAFLIL), 280-300 (AFIYVMVLWVNSATNGLLPSV), 315-335 (LSAALSAVANPVACIIAMFFP), 339-359 (LVFLGILCLLGSTFGGYNMAM), 376-396 (AIIVLSWVFFTGLLSYVKVMV), and 407-427 (ALVWCGAAVQTGSLLGSIIMF).

This sequence belongs to the riboflavin transporter family.

The protein resides in the cell membrane. The enzyme catalyses riboflavin(in) = riboflavin(out). Its function is as follows. Plasma membrane transporter mediating the uptake by cells of the water soluble vitamin B2/riboflavin that plays a key role in biochemical oxidation-reduction reactions of the carbohydrate, lipid, and amino acid metabolism. This Danio rerio (Zebrafish) protein is Solute carrier family 52, riboflavin transporter, member 3-A (slc52a3a).